The sequence spans 473 residues: Glutamate--tRNA ligase 2 (473 aa).

The 'HIGH' region motif lies at 11 to 21 (PSPTGYLHIGG). Over residues 113 to 133 (KARAEGRPPRYDGRWRDRDPS) the composition is skewed to basic and acidic residues. The disordered stretch occupies residues 113–136 (KARAEGRPPRYDGRWRDRDPSEAP). The 'KMSKS' region motif lies at 240-244 (KLSKR). Lysine 243 is an ATP binding site.

Belongs to the class-I aminoacyl-tRNA synthetase family. Glutamate--tRNA ligase type 1 subfamily. In terms of assembly, monomer.

It localises to the cytoplasm. The enzyme catalyses tRNA(Glu) + L-glutamate + ATP = L-glutamyl-tRNA(Glu) + AMP + diphosphate. Functionally, catalyzes the attachment of glutamate to tRNA(Glu) in a two-step reaction: glutamate is first activated by ATP to form Glu-AMP and then transferred to the acceptor end of tRNA(Glu). The sequence is that of Glutamate--tRNA ligase 2 from Brucella suis biovar 1 (strain 1330).